A 244-amino-acid chain; its full sequence is MNGFSDLNPSESKPSLSQLAPLEAILFDVDGTLCDSDPIHLIAFQELLQEIGFNNGVPIDEKFFVENIAGKHNSEIALLLFPDDVSRGLKFCDEKEALYRKIVAEKIKPLDGLIKLTKWIEDRGLKRAAVTNAPKENAELMISKLGLTDFFQAVILGSECEFPKPHPGPYLKALEVLNVSKEHTLVFEDSISGIKAGVAAGMPVIGLTTGNPASLLMQAKPAFLIENYADPKLWAVLEELDNKS.

The Nucleophile role is filled by D28. Residues D28, D30, and D189 each contribute to the Mg(2+) site. The active-site Proton donor is the D30.

This sequence belongs to the HAD-like hydrolase superfamily. DOG/GPP family. Mg(2+) is required as a cofactor. As to expression, ubiquitous with highest expression in flowers.

In terms of biological role, acts as a phosphosugar phosphatase on a broad range of sugar phosphate substrates with preferential activity on D-ribose-5-phosphate, 2-deoxy-D-ribose-5-phosphate, 2-deoxy-D-glucose-6-phosphate, and D-mannose-6-phosphate and with a lower activity on D-fructose-1-phosphate, D-glucose-6-phosphate, DL-glycerol-3-phosphate, and D-fructose-6-phosphate. The sequence is that of Haloacid dehalogenase-like hydrolase domain-containing protein Sgpp (SGPP) from Arabidopsis thaliana (Mouse-ear cress).